The primary structure comprises 129 residues: uncharacterized protein (129 aa).

Residues 1 to 129 (MWLWQDIQCC…HTSNGRTGDL (129 aa)) are disordered. Basic and acidic residues predominate over residues 87-100 (KGADTRRLPRETRP). Over residues 119 to 129 (PHTSNGRTGDL) the composition is skewed to polar residues.

This is an uncharacterized protein from Homo sapiens (Human).